Consider the following 376-residue polypeptide: Cytochrome-c peroxidase IdrP1 (376 aa).

Positions 1–24 (MGHIRSIRLALAVAAVCTAASAAA) are cleaved as a signal peptide. 2 Cytochrome c domains span residues 49-157 (DKVA…AAFK) and 203-354 (AEAQ…EALS). The heme c site is built by C71, C74, H75, C218, C221, and H222.

As to quaternary structure, the iodate reductase (Idr) complex is composed of a molybdopterin-dependent iodate reductase (IdrA and IdrB subunits) and two associated peroxidases (IdrP1 and IdrP2). Heme c serves as cofactor.

It is found in the periplasm. It catalyses the reaction 2 Fe(II)-[cytochrome c] + H2O2 + 2 H(+) = 2 Fe(III)-[cytochrome c] + 2 H2O. Its function is as follows. Involved in iodate respiration. May play a critical role in detoxification of inadvertent H(2)O(2) generated by the iodate reductase IdrA/IdrB. The protein is Cytochrome-c peroxidase IdrP1 of Denitromonas iodatirespirans.